A 127-amino-acid polypeptide reads, in one-letter code: Histone H2B.2 (127 aa).

A disordered region spans residues 1-35 (MAPKAEKKPASKAPAAKKTTASTDASKKRTKTRKE). Lysine 7 and lysine 8 each carry N6-acetyllysine; alternate. Glycyl lysine isopeptide (Lys-Gly) (interchain with G-Cter in SUMO); alternate cross-links involve residues lysine 7 and lysine 8. The residue at position 11 (serine 11) is a Phosphoserine. Low complexity predominate over residues 11 to 24 (SKAPAAKKTTASTD). Lysine 12 bears the N6-acetyllysine mark. Lysine 120 is covalently cross-linked (Glycyl lysine isopeptide (Lys-Gly) (interchain with G-Cter in ubiquitin)).

This sequence belongs to the histone H2B family. The nucleosome is a histone octamer containing two molecules each of H2A, H2B, H3 and H4 assembled in one H3-H4 heterotetramer and two H2A-H2B heterodimers. The octamer wraps approximately 147 bp of DNA. In terms of processing, monoubiquitinated by the UBC2-BRE1 complex to form H2BK123ub1. H2BK123ub1 gives a specific tag for epigenetic transcriptional activation and is also prerequisite for H3K4me and H3K79me formation. H2BK123ub1 also modulates the formation of double-strand breaks during meiosis and is a prerequisite for DNA-damage checkpoint activation. Phosphorylated by STE20 to form H2BS10ph during progression through meiotic prophase. May be correlated with chromosome condensation. Post-translationally, acetylation of N-terminal lysines and particularly formation of H2BK11ac has a positive effect on transcription. In terms of processing, sumoylation to form H2BK6su or H2BK7su occurs preferentially near the telomeres and represses gene transcription.

Its subcellular location is the nucleus. The protein resides in the chromosome. Its function is as follows. Core component of nucleosome. Nucleosomes wrap and compact DNA into chromatin, limiting DNA accessibility to the cellular machineries which require DNA as a template. Histones thereby play a central role in transcription regulation, DNA repair, DNA replication and chromosomal stability. DNA accessibility is regulated via a complex set of post-translational modifications of histones, also called histone code, and nucleosome remodeling. The protein is Histone H2B.2 (HTB2) of Eremothecium gossypii (strain ATCC 10895 / CBS 109.51 / FGSC 9923 / NRRL Y-1056) (Yeast).